The sequence spans 464 residues: ATP-dependent protease ATPase subunit HslU (464 aa).

Residues Val-18, 60–65, Asp-277, Glu-342, and Arg-414 each bind ATP; that span reads GVGKTE.

It belongs to the ClpX chaperone family. HslU subfamily. As to quaternary structure, a double ring-shaped homohexamer of HslV is capped on each side by a ring-shaped HslU homohexamer. The assembly of the HslU/HslV complex is dependent on binding of ATP.

Its subcellular location is the cytoplasm. In terms of biological role, ATPase subunit of a proteasome-like degradation complex; this subunit has chaperone activity. The binding of ATP and its subsequent hydrolysis by HslU are essential for unfolding of protein substrates subsequently hydrolyzed by HslV. HslU recognizes the N-terminal part of its protein substrates and unfolds these before they are guided to HslV for hydrolysis. The polypeptide is ATP-dependent protease ATPase subunit HslU (Lactobacillus leichmannii).